A 403-amino-acid polypeptide reads, in one-letter code: S-adenosylmethionine synthase (403 aa).

His16 contacts ATP. Residue Asp18 participates in Mg(2+) binding. Glu44 is a binding site for K(+). 2 residues coordinate L-methionine: Glu57 and Gln100. The interval 100 to 110 is flexible loop; the sequence is QSNDIAQGVDH. ATP contacts are provided by residues 167–169, 238–239, Asp247, 253–254, Ala270, and Lys274; these read DAK, RF, and RK. Asp247 contributes to the L-methionine binding site. Lys278 serves as a coordination point for L-methionine.

Belongs to the AdoMet synthase family. In terms of assembly, homotetramer; dimer of dimers. Mg(2+) is required as a cofactor. The cofactor is K(+).

Its subcellular location is the cytoplasm. It catalyses the reaction L-methionine + ATP + H2O = S-adenosyl-L-methionine + phosphate + diphosphate. The protein operates within amino-acid biosynthesis; S-adenosyl-L-methionine biosynthesis; S-adenosyl-L-methionine from L-methionine: step 1/1. Functionally, catalyzes the formation of S-adenosylmethionine (AdoMet) from methionine and ATP. The overall synthetic reaction is composed of two sequential steps, AdoMet formation and the subsequent tripolyphosphate hydrolysis which occurs prior to release of AdoMet from the enzyme. In Verminephrobacter eiseniae (strain EF01-2), this protein is S-adenosylmethionine synthase.